A 445-amino-acid chain; its full sequence is TNF receptor-associated factor family protein DDB_G0290971 (445 aa).

The RING-type; degenerate zinc-finger motif lies at 23-67 (CPICFDLYYSSSSKKEVFQCRDGHLACKSCWSDSLLNKKECMICR). 2 consecutive TRAF-type zinc fingers follow at residues 133 to 186 (KHQV…QLDA) and 186 to 242 (AHAL…ESID). A coiled-coil region spans residues 269-307 (QLELVECKNQIYQINNKYEKLLERVIKLEQLSMDASNKL). The MATH domain occupies 314–441 (KNSIIFATFS…EDKLVIGLRI (128 aa)).

The protein belongs to the TNF receptor-associated factor family. A subfamily.

The protein resides in the cytoplasm. Functionally, probable adapter protein and signal transducer that links members of the tumor necrosis factor receptor family to different signaling pathways by association with the receptor cytoplasmic domain and kinases. This chain is TNF receptor-associated factor family protein DDB_G0290971, found in Dictyostelium discoideum (Social amoeba).